A 116-amino-acid chain; its full sequence is Large ribosomal subunit protein uL18 (116 aa).

The protein belongs to the universal ribosomal protein uL18 family. As to quaternary structure, part of the 50S ribosomal subunit; part of the 5S rRNA/L5/L18/L25 subcomplex. Contacts the 5S and 23S rRNAs.

This is one of the proteins that bind and probably mediate the attachment of the 5S RNA into the large ribosomal subunit, where it forms part of the central protuberance. The protein is Large ribosomal subunit protein uL18 of Shewanella loihica (strain ATCC BAA-1088 / PV-4).